A 194-amino-acid polypeptide reads, in one-letter code: Peptidyl-tRNA hydrolase (194 aa).

Tyrosine 17 lines the tRNA pocket. Histidine 22 (proton acceptor) is an active-site residue. TRNA-binding residues include phenylalanine 68, asparagine 70, and asparagine 116.

This sequence belongs to the PTH family. As to quaternary structure, monomer.

The protein localises to the cytoplasm. The enzyme catalyses an N-acyl-L-alpha-aminoacyl-tRNA + H2O = an N-acyl-L-amino acid + a tRNA + H(+). Functionally, hydrolyzes ribosome-free peptidyl-tRNAs (with 1 or more amino acids incorporated), which drop off the ribosome during protein synthesis, or as a result of ribosome stalling. Its function is as follows. Catalyzes the release of premature peptidyl moieties from peptidyl-tRNA molecules trapped in stalled 50S ribosomal subunits, and thus maintains levels of free tRNAs and 50S ribosomes. The polypeptide is Peptidyl-tRNA hydrolase (Shewanella sediminis (strain HAW-EB3)).